We begin with the raw amino-acid sequence, 905 residues long: Chitin synthase 3B (905 aa).

The segment covering 1 to 10 (MAYNGRDQEY) has biased composition (basic and acidic residues). Positions 1–136 (MAYNGRDQEY…GGGGGLGRSK (136 aa)) are disordered. A compositionally biased stretch (gly residues) spans 81-93 (GPTGYGDTGGSFG). A glycan (N-linked (GlcNAc...) asparagine) is linked at asparagine 536. A helical transmembrane segment spans residues 562-584 (MFFLHIQLIYTTLNTMFAWFSLG). A glycan (N-linked (GlcNAc...) asparagine) is linked at asparagine 601. Transmembrane regions (helical) follow at residues 618–638 (IVNALLQYLYLAFVMLQFILA), 653–673 (SFMVFGLIQGYILVLSAYLVV), 705–725 (VILVALITIYGLNFIASFMYL), 733–753 (SFPYYLVLMSTYINILMVYAF), 832–852 (TGLVVCWLFGNILLIVCITST), and 873–893 (FLLYATAVLSLVRFFGFLWFL).

Belongs to the chitin synthase family. Class III subfamily.

The protein resides in the cell membrane. It carries out the reaction [(1-&gt;4)-N-acetyl-beta-D-glucosaminyl](n) + UDP-N-acetyl-alpha-D-glucosamine = [(1-&gt;4)-N-acetyl-beta-D-glucosaminyl](n+1) + UDP + H(+). Polymerizes chitin, a structural polymer of the cell wall and septum, by transferring the sugar moiety of UDP-GlcNAc to the non-reducing end of the growing chitin polymer. Plays essential functions in fungal survival and host infection. The sequence is that of Chitin synthase 3B from Gibberella zeae (strain ATCC MYA-4620 / CBS 123657 / FGSC 9075 / NRRL 31084 / PH-1) (Wheat head blight fungus).